A 1086-amino-acid chain; its full sequence is NAD(P) transhydrogenase, mitochondrial (1086 aa).

Residues 1–43 (MAHLLKTVVAGCSCPFLSNLGSSKVLPGKRDFVRTLRTHQALW) constitute a mitochondrion transit peptide. Residues 44-474 (CKSPVKPGIP…TVSMYTKTLT (431 aa)) lie on the Mitochondrial matrix side of the membrane. Residue Lys70 is modified to N6-acetyllysine. Lys117 carries the N6-succinyllysine modification. 182–184 (RVT) provides a ligand contact to NAD(+). The residue at position 224 (Lys224) is an N6-succinyllysine. NAD(+) is bound by residues Val237, 257–259 (DTR), and Gly287. N6-succinyllysine is present on Lys294. Residues Glu300 and Leu319 each coordinate NAD(+). Lys331 is subject to N6-succinyllysine. An N6-acetyllysine modification is found at Lys397. Transmembrane regions (helical) follow at residues 475–493 (TASVYSAGLTGMLGLGIVA), 501–521 (MVTTFGLAGIIGYHTVWGVTP), 527–546 (LMSVTNAISGLTAVGGLALM), and 558–578 (SLAALATFISSVNIAGGFLVT). The Mitochondrial matrix segment spans residues 579 to 595 (QRMLDMFKRPTDPPEYN). A run of 5 helical transmembrane segments spans residues 596–616 (YLYLLPGGTFVGGYLAALYGG), 622–642 (IMYLGSGLCCVGALGGLSTQG), 646–666 (LGNALGMIGVAGGLAATLGGL), 672–691 (LLAQMSGAMAMGGTIGLTIA), and 702–722 (LVAAFHSLVGLAAVLTCMAEY). At 723–739 (IVEYPHFAMDATSNFTK) the chain is on the cytoplasmic side. A run of 5 helical transmembrane segments spans residues 740–760 (IVAYLGTYIGGVTFSGSLVAY), 778–797 (HALNAGLLAASVGGIIPFMA), 801–819 (FTTGITCLGSVSGLSTLMG), 833–853 (VVITVLNSYSGWALCAEGFLL), and 857–879 (LLTIVGALIGSSGAILSYIMCVA). Topologically, residues 880–1086 (MNRSLANVIL…QAKVRESYQK (207 aa)) are mitochondrial matrix. NADP(+) contacts are provided by residues Tyr933, 965-970 (VAGRMP), 1007-1011 (GANDT), 1026-1027 (GM), 1042-1049 (KRSLGVGY), and 1068-1069 (DA). At Lys1079 the chain carries N6-succinyllysine.

In the N-terminal section; belongs to the AlaDH/PNT family. This sequence in the C-terminal section; belongs to the PNT beta subunit family. Homodimer. As to expression, widely expressed with expression most readily detectable in adrenal, heart, kidney, thyroid and adipose tissues.

It is found in the mitochondrion inner membrane. It catalyses the reaction NAD(+) + NADPH + H(+)(in) = NADH + NADP(+) + H(+)(out). Its function is as follows. The transhydrogenation between NADH and NADP is coupled to respiration and ATP hydrolysis and functions as a proton pump across the membrane. May play a role in reactive oxygen species (ROS) detoxification in the adrenal gland. The sequence is that of NAD(P) transhydrogenase, mitochondrial (Nnt) from Mus musculus (Mouse).